The sequence spans 240 residues: Uridylate kinase (240 aa).

Residues 15-18 (KISG), Gly-58, and Arg-62 contribute to the ATP site. UMP is bound by residues Asp-77 and 138–145 (TGNPLFTT). The ATP site is built by Thr-165, Tyr-171, and Asp-174.

It belongs to the UMP kinase family. As to quaternary structure, homohexamer.

The protein resides in the cytoplasm. The catalysed reaction is UMP + ATP = UDP + ADP. Its pathway is pyrimidine metabolism; CTP biosynthesis via de novo pathway; UDP from UMP (UMPK route): step 1/1. With respect to regulation, inhibited by UTP. Its function is as follows. Catalyzes the reversible phosphorylation of UMP to UDP. The polypeptide is Uridylate kinase (Buchnera aphidicola subsp. Schizaphis graminum (strain Sg)).